We begin with the raw amino-acid sequence, 585 residues long: Sodium/calcium exchanger NCL (585 aa).

Helical transmembrane passes span V83–G103, L106–A126, V149–G169, I212–T232, and V239–F259. 2 EF-hand domains span residues P299–E334 and D339–Q374. 9 residues coordinate Ca(2+): D312, N314, D316, H318, E323, D352, D356, Q358, and E363. 2 consecutive transmembrane segments (helical) span residues W427–A447 and F457–T477. N-linked (GlcNAc...) asparagine glycosylation occurs at N478. 3 helical membrane passes run C505 to V525, F532 to F552, and L558 to L578.

This sequence belongs to the Ca(2+):cation antiporter (CaCA) (TC 2.A.19) family. Expressed in roots, leaves, stems, petals, stamens, ovules and siliques.

It localises to the cell membrane. Its subcellular location is the vacuole membrane. In terms of biological role, possesses sodium/calcium exchanger (NCX) activity when expressed in a heterologous mammalian CHO-K1 cell system. Does not possess cation/proton exchanger (CAX) or sodium/proton (NHX) activity when expressed in a heterologous yeast cell system. Has the ability to bind calcium in vitro. Participates in the maintenance of calcium homeostasis. May play a role in auxin response, diurnal rhythm and flowering time. Involved in salt stress response. The polypeptide is Sodium/calcium exchanger NCL (Arabidopsis thaliana (Mouse-ear cress)).